The sequence spans 654 residues: Tetracycline resistance protein TetQ (654 aa).

A tr-type G domain is found at 1–244 (MNIINLGILA…AISSFILPPE (244 aa)). GTP is bound by residues 10–17 (AHIDAGKT), 74–78 (DTPGH), and 128–131 (NKID).

Belongs to the TRAFAC class translation factor GTPase superfamily. Classic translation factor GTPase family. TetM/TetO subfamily.

Its function is as follows. Abolishes the inhibitory effect of tetracyclin on protein synthesis by a non-covalent modification of the ribosomes. The sequence is that of Tetracycline resistance protein TetQ (tetQ) from Prevotella intermedia.